A 66-amino-acid polypeptide reads, in one-letter code: Large ribosomal subunit protein bL33c (66 aa).

This sequence belongs to the bacterial ribosomal protein bL33 family.

It localises to the plastid. Its subcellular location is the chloroplast. In Calycanthus floridus var. glaucus (Eastern sweetshrub), this protein is Large ribosomal subunit protein bL33c.